The primary structure comprises 87 residues: Large ribosomal subunit protein bL31B (87 aa).

Belongs to the bacterial ribosomal protein bL31 family. Type B subfamily. As to quaternary structure, part of the 50S ribosomal subunit.

This chain is Large ribosomal subunit protein bL31B, found in Pseudomonas paraeruginosa (strain DSM 24068 / PA7) (Pseudomonas aeruginosa (strain PA7)).